Here is a 396-residue protein sequence, read N- to C-terminus: Elongation factor Tu (396 aa).

Residues 10 to 206 (KPHVNVGTIG…ALDTYIPTPE (197 aa)) enclose the tr-type G domain. The G1 stretch occupies residues 19-26 (GHVDHGKT). GTP is bound at residue 19 to 26 (GHVDHGKT). Thr-26 provides a ligand contact to Mg(2+). The tract at residues 60-64 (GITIN) is G2. The interval 81–84 (DCPG) is G3. Residues 81–85 (DCPGH) and 136–139 (NKCD) each bind GTP. Residues 136-139 (NKCD) are G4. A G5 region spans residues 174–176 (SAK).

The protein belongs to the TRAFAC class translation factor GTPase superfamily. Classic translation factor GTPase family. EF-Tu/EF-1A subfamily. As to quaternary structure, monomer.

The protein resides in the cytoplasm. The enzyme catalyses GTP + H2O = GDP + phosphate + H(+). In terms of biological role, GTP hydrolase that promotes the GTP-dependent binding of aminoacyl-tRNA to the A-site of ribosomes during protein biosynthesis. This is Elongation factor Tu from Thiomonas delicata (Thiomonas cuprina).